A 64-amino-acid chain; its full sequence is DNA-binding protein 7 (64 aa).

Residues Lys-5 and Lys-7 each carry the N6-methyllysine modification.

This sequence belongs to the 7 kDa DNA-binding/endoribonuclease P2 family. In terms of assembly, monomer.

It is found in the cytoplasm. Its function is as follows. Can constrain negative DNA supercoils. May be involved in maintaining the integrity of the genome at high temperature. The sequence is that of DNA-binding protein 7 from Sulfurisphaera tokodaii (strain DSM 16993 / JCM 10545 / NBRC 100140 / 7) (Sulfolobus tokodaii).